A 239-amino-acid chain; its full sequence is Ribosomal RNA small subunit methyltransferase G (239 aa).

S-adenosyl-L-methionine is bound by residues Gly78, Phe83, 129–130 (AE), and Arg148.

The protein belongs to the methyltransferase superfamily. RNA methyltransferase RsmG family.

The protein localises to the cytoplasm. In terms of biological role, specifically methylates the N7 position of a guanine in 16S rRNA. This Clostridium perfringens (strain 13 / Type A) protein is Ribosomal RNA small subunit methyltransferase G.